A 555-amino-acid polypeptide reads, in one-letter code: 5'-nucleotidase-related protein (555 aa).

The first 25 residues, 1–25 (MKSLIGTLGLYCLFILTNNVVSSYG), serve as a signal peptide directing secretion. A divalent metal cation is bound by residues aspartate 38, histidine 40, and aspartate 91. N-linked (GlcNAc...) asparagine glycosylation occurs at asparagine 105. Asparagine 123 provides a ligand contact to a divalent metal cation. Asparagine 198 carries N-linked (GlcNAc...) asparagine glycosylation. Positions 225 and 249 each coordinate a divalent metal cation. Asparagine 295 is a glycosylation site (N-linked (GlcNAc...) asparagine). AMP contacts are provided by arginine 358, arginine 402, and phenylalanine 421. N-linked (GlcNAc...) asparagine glycosylation occurs at asparagine 465. Positions 505 and 511 each coordinate AMP.

The protein belongs to the 5'-nucleotidase family. The cofactor is Mg(2+). Mn(2+) is required as a cofactor. Salivary gland (at protein level). Saliva (at protein level).

Its subcellular location is the secreted. It catalyses the reaction a ribonucleoside 5'-triphosphate + 2 H2O = a ribonucleoside 5'-phosphate + 2 phosphate + 2 H(+). Its activity is regulated as follows. DEPC (2 mM), sodium fluoride (10 mM) and 4,4'-Diisothiocyano-2,2'-stilbenedisulfonic acid (DIDS, 100 uM) nearly completely abrogate activity. Concanavalin A enhances activity. In terms of biological role, facilitates hematophagy by inhibiting ADP-dependent platelet aggregation and promoting disaggregation of ADP-stimulated platelets in the host. Cleaves adenosine triphosphate (ATP) and adenosine diphosphate (ADP) to adenosine monophosphate (AMP) and inorganic phosphate. Interacts with fibrinogen receptor integrin alpha-IIb/beta-3 (ITGA2B/ITGB3). The sequence is that of 5'-nucleotidase-related protein from Glossina morsitans morsitans (Savannah tsetse fly).